A 153-amino-acid chain; its full sequence is 6,7-dimethyl-8-ribityllumazine synthase (153 aa).

5-amino-6-(D-ribitylamino)uracil-binding positions include phenylalanine 22, 56-58 (AFE), and 80-82 (AVI). 85–86 (GT) contributes to the (2S)-2-hydroxy-3-oxobutyl phosphate binding site. The Proton donor role is filled by histidine 88. Phenylalanine 113 contributes to the 5-amino-6-(D-ribitylamino)uracil binding site. (2S)-2-hydroxy-3-oxobutyl phosphate is bound at residue arginine 127.

It belongs to the DMRL synthase family. In terms of assembly, forms an icosahedral capsid composed of 60 subunits, arranged as a dodecamer of pentamers.

It catalyses the reaction (2S)-2-hydroxy-3-oxobutyl phosphate + 5-amino-6-(D-ribitylamino)uracil = 6,7-dimethyl-8-(1-D-ribityl)lumazine + phosphate + 2 H2O + H(+). The protein operates within cofactor biosynthesis; riboflavin biosynthesis; riboflavin from 2-hydroxy-3-oxobutyl phosphate and 5-amino-6-(D-ribitylamino)uracil: step 1/2. Functionally, catalyzes the formation of 6,7-dimethyl-8-ribityllumazine by condensation of 5-amino-6-(D-ribitylamino)uracil with 3,4-dihydroxy-2-butanone 4-phosphate. This is the penultimate step in the biosynthesis of riboflavin. The chain is 6,7-dimethyl-8-ribityllumazine synthase from Hydrogenovibrio crunogenus (strain DSM 25203 / XCL-2) (Thiomicrospira crunogena).